Consider the following 276-residue polypeptide: Dermonecrotic toxin LlSicTox-alphaIV2iii (276 aa).

His-5 is an active-site residue. Residues Glu-25 and Asp-27 each coordinate Mg(2+). His-41 functions as the Nucleophile in the catalytic mechanism. 2 disulfide bridges follow: Cys-45–Cys-51 and Cys-47–Cys-193. Asp-85 contacts Mg(2+).

Belongs to the arthropod phospholipase D family. Class II subfamily. Mg(2+) is required as a cofactor. Expressed by the venom gland.

It is found in the secreted. It carries out the reaction an N-(acyl)-sphingosylphosphocholine = an N-(acyl)-sphingosyl-1,3-cyclic phosphate + choline. The enzyme catalyses an N-(acyl)-sphingosylphosphoethanolamine = an N-(acyl)-sphingosyl-1,3-cyclic phosphate + ethanolamine. It catalyses the reaction a 1-acyl-sn-glycero-3-phosphocholine = a 1-acyl-sn-glycero-2,3-cyclic phosphate + choline. The catalysed reaction is a 1-acyl-sn-glycero-3-phosphoethanolamine = a 1-acyl-sn-glycero-2,3-cyclic phosphate + ethanolamine. In terms of biological role, dermonecrotic toxins cleave the phosphodiester linkage between the phosphate and headgroup of certain phospholipids (sphingolipid and lysolipid substrates), forming an alcohol (often choline) and a cyclic phosphate. This toxin acts on sphingomyelin (SM). It may also act on ceramide phosphoethanolamine (CPE), lysophosphatidylcholine (LPC) and lysophosphatidylethanolamine (LPE), but not on lysophosphatidylserine (LPS), and lysophosphatidylglycerol (LPG). It acts by transphosphatidylation, releasing exclusively cyclic phosphate products as second products. Induces dermonecrosis, hemolysis, increased vascular permeability, edema, inflammatory response, and platelet aggregation. The sequence is that of Dermonecrotic toxin LlSicTox-alphaIV2iii from Loxosceles laeta (South American recluse spider).